A 360-amino-acid polypeptide reads, in one-letter code: Glutamate--cysteine ligase (360 aa).

This sequence belongs to the glutamate--cysteine ligase type 2 family. YbdK subfamily.

It carries out the reaction L-cysteine + L-glutamate + ATP = gamma-L-glutamyl-L-cysteine + ADP + phosphate + H(+). Its function is as follows. Catalyzes the synthesis of gamma-glutamylcysteine (gamma-GC), the main low-molecular-weight thiol compound instead of glutathione in halophilic archaea. This Halobacterium salinarum (strain ATCC 29341 / DSM 671 / R1) protein is Glutamate--cysteine ligase.